Consider the following 1010-residue polypeptide: 2-oxoglutarate dehydrogenase-like, mitochondrial (1010 aa).

The transit peptide at 1–107 directs the protein to the mitochondrion; it reads MSQLRLLLFR…RASVSSCTKT (107 aa). Residues 28 to 47 are disordered; that stretch reads GGRRRSSGPPTTIPRSRGGV. His130, Asp143, and Asp145 together coordinate Ca(2+). Residues Arg299, Asp398, Asn431, Ile433, and Gln663 each coordinate thiamine diphosphate. Mg(2+) contacts are provided by Asp398, Asn431, and Ile433.

Belongs to the alpha-ketoglutarate dehydrogenase family. As to quaternary structure, the OGDHC complex comprises multiple copies of three catalytic enzyme components, the 2-oxoglutarate dehydrogenase (OGDH/E1), the dihydrolipoamide dehydrogenase (DLST/E2) and the dihydrolipoamide dehydrogenase (DLD/E3). OGDHL/E1-like isoenzyme may replace OGDH in the OGDHC complex in the brain. The presence of either ODGH/E1 or ODGHL/E1-like isoenzyme in the complex may depend on its tissular distribution. It depends on thiamine diphosphate as a cofactor. Mg(2+) serves as cofactor. As to expression, the OGDHL-containing OGDHC complex is present in the brain, but not in the heart.

It localises to the mitochondrion matrix. The enzyme catalyses N(6)-[(R)-lipoyl]-L-lysyl-[protein] + 2-oxoglutarate + H(+) = N(6)-[(R)-S(8)-succinyldihydrolipoyl]-L-lysyl-[protein] + CO2. Functionally, 2-oxoglutarate dehydrogenase (E1-like) component of the 2-oxoglutarate dehydrogenase multienzyme complex (OGDHC) which mediates the decarboxylation of alpha-ketoglutarate in the tricarboxylic acid cycle. The OGDHC complex catalyzes the overall conversion of 2-oxoglutarate to succinyl-CoA and CO(2) while reducing NAD(+) to NADH. The OGDHC complex is mainly active in the mitochondrion. Involved in the inhibition of cell proliferation and in apoptosis. The polypeptide is 2-oxoglutarate dehydrogenase-like, mitochondrial (Rattus norvegicus (Rat)).